Consider the following 526-residue polypeptide: Outer capsid protein VP5 (526 aa).

The interval 1–42 (MGKIIKSLSRFGKKVGNALTSNTAKKIYSTIGKAAERFAESE) is involved in membrane permeabilization.

The protein belongs to the orbivirus VP5 family.

It is found in the virion. In terms of biological role, VP5 protein is one of the two proteins (with VP2) which constitute the virus particle outer capsid. Acts as a membrane permeabilization protein that mediates release of viral particles from endosomal compartments into the cytoplasm. Permeabilization activity is probably negatively regulated by VP2 and is triggered by endosomal degradation of VP2 and exposure to low pH. In Bluetongue virus 11 (isolate USA) (BTV 11), this protein is Outer capsid protein VP5 (Segment-6).